We begin with the raw amino-acid sequence, 216 residues long: Probable transaldolase (216 aa).

The active-site Schiff-base intermediate with substrate is the lysine 83.

Belongs to the transaldolase family. Type 3B subfamily.

The protein localises to the cytoplasm. The catalysed reaction is D-sedoheptulose 7-phosphate + D-glyceraldehyde 3-phosphate = D-erythrose 4-phosphate + beta-D-fructose 6-phosphate. The protein operates within carbohydrate degradation; pentose phosphate pathway; D-glyceraldehyde 3-phosphate and beta-D-fructose 6-phosphate from D-ribose 5-phosphate and D-xylulose 5-phosphate (non-oxidative stage): step 2/3. In terms of biological role, transaldolase is important for the balance of metabolites in the pentose-phosphate pathway. The chain is Probable transaldolase from Symbiobacterium thermophilum (strain DSM 24528 / JCM 14929 / IAM 14863 / T).